Reading from the N-terminus, the 367-residue chain is Chorismate synthase (367 aa).

The disordered stretch occupies residues 41 to 60 (FTHDLQRRASGKSRHTSARR). Arginine 48 and arginine 54 together coordinate NADP(+). FMN contacts are provided by residues 125–127 (RSS), 238–239 (NA), glycine 278, 293–297 (KPTSS), and arginine 319.

This sequence belongs to the chorismate synthase family. Homotetramer. The cofactor is FMNH2.

The catalysed reaction is 5-O-(1-carboxyvinyl)-3-phosphoshikimate = chorismate + phosphate. It participates in metabolic intermediate biosynthesis; chorismate biosynthesis; chorismate from D-erythrose 4-phosphate and phosphoenolpyruvate: step 7/7. Its function is as follows. Catalyzes the anti-1,4-elimination of the C-3 phosphate and the C-6 proR hydrogen from 5-enolpyruvylshikimate-3-phosphate (EPSP) to yield chorismate, which is the branch point compound that serves as the starting substrate for the three terminal pathways of aromatic amino acid biosynthesis. This reaction introduces a second double bond into the aromatic ring system. The chain is Chorismate synthase from Xanthomonas euvesicatoria pv. vesicatoria (strain 85-10) (Xanthomonas campestris pv. vesicatoria).